A 510-amino-acid chain; its full sequence is NAD(P)H-quinone oxidoreductase subunit 2 A, chloroplastic (510 aa).

A run of 14 helical transmembrane segments spans residues Leu31–Thr51, Ile57–Phe77, Ile99–Ile119, Met124–Cys144, Leu149–Tyr169, Leu184–Leu204, Ile229–Phe249, Pro261–Thr281, Trp295–Ile315, Met323–Asp343, Tyr354–Leu374, Ala395–Phe415, Leu418–Leu438, and Met484–Ile504.

The protein belongs to the complex I subunit 2 family. As to quaternary structure, NDH is composed of at least 16 different subunits, 5 of which are encoded in the nucleus.

Its subcellular location is the plastid. The protein resides in the chloroplast thylakoid membrane. It carries out the reaction a plastoquinone + NADH + (n+1) H(+)(in) = a plastoquinol + NAD(+) + n H(+)(out). The enzyme catalyses a plastoquinone + NADPH + (n+1) H(+)(in) = a plastoquinol + NADP(+) + n H(+)(out). Functionally, NDH shuttles electrons from NAD(P)H:plastoquinone, via FMN and iron-sulfur (Fe-S) centers, to quinones in the photosynthetic chain and possibly in a chloroplast respiratory chain. The immediate electron acceptor for the enzyme in this species is believed to be plastoquinone. Couples the redox reaction to proton translocation, and thus conserves the redox energy in a proton gradient. The sequence is that of NAD(P)H-quinone oxidoreductase subunit 2 A, chloroplastic from Nicotiana tabacum (Common tobacco).